A 283-amino-acid polypeptide reads, in one-letter code: uncharacterized protein (283 aa).

The segment at 1-21 (MSAYTHPMERELSGLSSRGNS) is disordered. Residues 41 to 61 (SIFIASLVTFGVLMITLLIAL) form a helical membrane-spanning segment.

It belongs to the APS1/VSP family.

It localises to the membrane. This is an uncharacterized protein from Arabidopsis thaliana (Mouse-ear cress).